Reading from the N-terminus, the 407-residue chain is Arrestin domain-containing protein 2 (407 aa).

It belongs to the arrestin family. As to quaternary structure, interacts with WWP1 (via WW domains).

In Homo sapiens (Human), this protein is Arrestin domain-containing protein 2 (ARRDC2).